The following is a 31-amino-acid chain: GIIPCGESCVFIPCITSVVGCSCKSKVCYKN.

Positions 1-31 (GIIPCGESCVFIPCITSVVGCSCKSKVCYKN) form a cross-link, cyclopeptide (Gly-Asn). 3 disulfides stabilise this stretch: Cys-5–Cys-21, Cys-9–Cys-23, and Cys-14–Cys-28.

It belongs to the cyclotide family. Bracelet subfamily. In terms of processing, this is a cyclic peptide.

Probably participates in a plant defense mechanism. The chain is Cyclotide vpub-B from Viola pubescens (Downy yellow violet).